The following is a 188-amino-acid chain: Adenine phosphoribosyltransferase (188 aa).

Belongs to the purine/pyrimidine phosphoribosyltransferase family. As to quaternary structure, homodimer.

Its subcellular location is the cytoplasm. The enzyme catalyses AMP + diphosphate = 5-phospho-alpha-D-ribose 1-diphosphate + adenine. Its pathway is purine metabolism; AMP biosynthesis via salvage pathway; AMP from adenine: step 1/1. Functionally, catalyzes a salvage reaction resulting in the formation of AMP, that is energically less costly than de novo synthesis. The chain is Adenine phosphoribosyltransferase from Burkholderia orbicola (strain MC0-3).